We begin with the raw amino-acid sequence, 654 residues long: Tetratricopeptide repeat protein 30 homolog (654 aa).

7 TPR repeats span residues 10 to 43 (DGEY…STTR), 44 to 76 (AGLS…VPDV), 145 to 178 (ASTK…GGFN), 180 to 212 (HVAY…GIRN), 393 to 426 (CRSA…RAWI), 452 to 485 (SWRL…NYDD), and 535 to 568 (CIVN…GSGA).

This sequence belongs to the TTC30/dfy-1/fleer family.

The protein localises to the cell projection. The protein resides in the cilium. In terms of biological role, required for polyglutamylation of axonemal tubulin in sensory cilia. Plays a role in anterograde intraflagellar transport (IFT), the process by which cilia precursors are transported from the base of the cilium to the site of their incorporation at the tip. This Anopheles gambiae (African malaria mosquito) protein is Tetratricopeptide repeat protein 30 homolog.